The chain runs to 531 residues: MPQVAASSSNVGPSSAAASSASHVQEVAKSASDPPKHTSFSSIGISPMLIRSLASLQIKVPTPIQSLTIPSVLEGRDLVGGAQTGSGKTLCFALPILNKLIKDMVGGFAVVLTPTRELGVQLHEQFVAVGEGARMGLRCALVLGGMDMMKQASELANLRPHVIVATPGRLVDHLRSGGGEEWGLRRCKFLVLDEADRLLTDTFKPELEYLYSVLPSAKTLQTLLFTATLTEQVVEFANAKRPEGKPAPMVCKIEMDTKTPETLEQRYVFVPSHVREPYLYHILRHPPIKPSSERVRKLNAKHQADRERKEENQRKSGKRRRTHHASDSDLDQDDDAALFLPATIIFTARCKTAATLSGMLAELGIPNVSLHSHLRQSERSENLQTFRAQRVPVLIATDVGSRGLDIPDVELVINWDLPSAWQDYVHRVGRTARNGKRGFAISFITERDIDVIHSIEDKINTKLTQLEGLEDEDKILEKLNAVATAKRVATMALHDSQFGERQQRNQHKQLARLKAEKRASKKAKSAGHDQQ.

The segment covering 1 to 28 (MPQVAASSSNVGPSSAAASSASHVQEVA) has biased composition (low complexity). The disordered stretch occupies residues 1 to 39 (MPQVAASSSNVGPSSAAASSASHVQEVAKSASDPPKHTS). Positions 38–66 (TSFSSIGISPMLIRSLASLQIKVPTPIQS) match the Q motif motif. In terms of domain architecture, Helicase ATP-binding spans 69–247 (IPSVLEGRDL…NAKRPEGKPA (179 aa)). ATP is bound at residue 82–89 (AQTGSGKT). Positions 193–196 (DEAD) match the DEAD box motif. Positions 291–314 (SSERVRKLNAKHQADRERKEENQR) are enriched in basic and acidic residues. Disordered regions lie at residues 291–331 (SSER…SDLD) and 495–531 (DSQF…HDQQ). Positions 332-531 (QDDDAALFLP…KAKSAGHDQQ (200 aa)) constitute a Helicase C-terminal domain.

This sequence belongs to the DEAD box helicase family. DDX49/DBP8 subfamily.

The protein localises to the nucleus. It is found in the nucleolus. The enzyme catalyses ATP + H2O = ADP + phosphate + H(+). Its function is as follows. ATP-binding RNA helicase involved in 40S ribosomal subunit biogenesis and is required for the normal formation of 18S rRNAs through pre-rRNA processing at A0, A1 and A2 sites. Required for vegetative growth. This chain is ATP-dependent RNA helicase DBP8 (DBP8), found in Mycosarcoma maydis (Corn smut fungus).